A 422-amino-acid chain; its full sequence is Enolase (422 aa).

Gln-162 serves as a coordination point for (2R)-2-phosphoglycerate. The active-site Proton donor is the Glu-204. Mg(2+)-binding residues include Asp-241, Glu-284, and Asp-311. Lys-336, Arg-365, Ser-366, and Lys-387 together coordinate (2R)-2-phosphoglycerate. Lys-336 functions as the Proton acceptor in the catalytic mechanism.

It belongs to the enolase family. Component of the RNA degradosome, a multiprotein complex involved in RNA processing and mRNA degradation. Requires Mg(2+) as cofactor.

The protein resides in the cytoplasm. The protein localises to the secreted. Its subcellular location is the cell surface. It carries out the reaction (2R)-2-phosphoglycerate = phosphoenolpyruvate + H2O. It functions in the pathway carbohydrate degradation; glycolysis; pyruvate from D-glyceraldehyde 3-phosphate: step 4/5. Catalyzes the reversible conversion of 2-phosphoglycerate (2-PG) into phosphoenolpyruvate (PEP). It is essential for the degradation of carbohydrates via glycolysis. In Legionella pneumophila (strain Paris), this protein is Enolase.